Consider the following 454-residue polypeptide: tRNA modification GTPase MnmE (454 aa).

Positions 23, 80, and 120 each coordinate (6S)-5-formyl-5,6,7,8-tetrahydrofolate. The TrmE-type G domain maps to 216-377 (GMKVVIAGRP…LRNHLKQSMG (162 aa)). Residue Asn226 coordinates K(+). Residues 226–231 (NAGKSS), 245–251 (TDIAGTT), 270–273 (DTAG), 335–338 (NKAD), and 358–360 (SAR) contribute to the GTP site. Ser230 serves as a coordination point for Mg(2+). Thr245, Ile247, and Thr250 together coordinate K(+). Mg(2+) is bound at residue Thr251. A (6S)-5-formyl-5,6,7,8-tetrahydrofolate-binding site is contributed by Lys454.

It belongs to the TRAFAC class TrmE-Era-EngA-EngB-Septin-like GTPase superfamily. TrmE GTPase family. In terms of assembly, homodimer. Heterotetramer of two MnmE and two MnmG subunits. K(+) serves as cofactor.

The protein resides in the cytoplasm. In terms of biological role, exhibits a very high intrinsic GTPase hydrolysis rate. Involved in the addition of a carboxymethylaminomethyl (cmnm) group at the wobble position (U34) of certain tRNAs, forming tRNA-cmnm(5)s(2)U34. The sequence is that of tRNA modification GTPase MnmE from Salmonella typhi.